The chain runs to 146 residues: UPF0735 ACT domain-containing protein CHY_1913 (146 aa).

In terms of domain architecture, ACT spans 70–145; sequence TLALNLEHRA…GVSKVELVGQ (76 aa).

Belongs to the UPF0735 family.

The polypeptide is UPF0735 ACT domain-containing protein CHY_1913 (Carboxydothermus hydrogenoformans (strain ATCC BAA-161 / DSM 6008 / Z-2901)).